Consider the following 190-residue polypeptide: Elongation factor P-like protein (190 aa).

The protein belongs to the elongation factor P family.

This Citrobacter koseri (strain ATCC BAA-895 / CDC 4225-83 / SGSC4696) protein is Elongation factor P-like protein.